Consider the following 124-residue polypeptide: Small ribosomal subunit protein uS12 (124 aa).

The interval 1–30 (MPTIQQLVRKGRTPKVTKTKAPALKANPQQ) is disordered. Residues 9–18 (RKGRTPKVTK) show a composition bias toward basic residues.

Belongs to the universal ribosomal protein uS12 family. As to quaternary structure, part of the 30S ribosomal subunit. Contacts proteins S8 and S17. May interact with IF1 in the 30S initiation complex.

Its function is as follows. With S4 and S5 plays an important role in translational accuracy. Functionally, interacts with and stabilizes bases of the 16S rRNA that are involved in tRNA selection in the A site and with the mRNA backbone. Located at the interface of the 30S and 50S subunits, it traverses the body of the 30S subunit contacting proteins on the other side and probably holding the rRNA structure together. The combined cluster of proteins S8, S12 and S17 appears to hold together the shoulder and platform of the 30S subunit. The protein is Small ribosomal subunit protein uS12 of Leifsonia xyli subsp. xyli (strain CTCB07).